Consider the following 317-residue polypeptide: Glutathione synthetase (317 aa).

The 187-residue stretch at 124 to 310 folds into the ATP-grasp domain; it reads EKLFTAWFPE…ITGKLMDAIE (187 aa). An ATP-binding site is contributed by 150 to 207; it reads FRQEHGDIILKPLDGMGGASIFRVKENDPNVSVIIETLTNHGQNYAMAQTFVPDISNG. Mg(2+) is bound by residues glutamate 281 and asparagine 283.

The protein belongs to the prokaryotic GSH synthase family. The cofactor is Mg(2+). Requires Mn(2+) as cofactor.

It carries out the reaction gamma-L-glutamyl-L-cysteine + glycine + ATP = glutathione + ADP + phosphate + H(+). Its pathway is sulfur metabolism; glutathione biosynthesis; glutathione from L-cysteine and L-glutamate: step 2/2. This Vibrio vulnificus (strain CMCP6) protein is Glutathione synthetase.